The chain runs to 651 residues: Peptide-N(4)-(N-acetyl-beta-glucosaminyl)asparagine amidase (651 aa).

Positions 29-90 constitute a PUB domain; sequence EASRLLLTYA…EGETHMVFPK (62 aa). Zn(2+) is bound by residues cysteine 246, cysteine 249, cysteine 279, and cysteine 282. Cysteine 305 serves as the catalytic Nucleophile. Residues histidine 332 and aspartate 349 contribute to the active site. A PAW domain is found at 450–651; it reads EFGGRTSGSM…LEMIIKLADL (202 aa).

It belongs to the transglutaminase-like superfamily. PNGase family. Zn(2+) serves as cofactor.

Its subcellular location is the cytoplasm. It catalyses the reaction Hydrolysis of an N(4)-(acetyl-beta-D-glucosaminyl)asparagine residue in which the glucosamine residue may be further glycosylated, to yield a (substituted) N-acetyl-beta-D-glucosaminylamine and a peptide containing an aspartate residue.. Its function is as follows. Specifically deglycosylates the denatured form of N-linked glycoproteins in the cytoplasm and assists their proteasome-mediated degradation. Cleaves the beta-aspartyl-glucosamine (GlcNAc) of the glycan and the amide side chain of Asn, converting Asn to Asp. Prefers proteins containing high-mannose over those bearing complex type oligosaccharides. Can recognize misfolded proteins in the endoplasmic reticulum that are exported to the cytosol to be destroyed and deglycosylate them, while it has no activity toward native proteins. Deglycosylation is a prerequisite for subsequent proteasome-mediated degradation of some, but not all, misfolded glycoproteins. The chain is Peptide-N(4)-(N-acetyl-beta-glucosaminyl)asparagine amidase (NGLY1) from Gallus gallus (Chicken).